The chain runs to 282 residues: Elongation factor Ts (282 aa).

Residues 80–83 (TDFV) form an involved in Mg(2+) ion dislocation from EF-Tu region.

The protein belongs to the EF-Ts family.

It localises to the cytoplasm. Associates with the EF-Tu.GDP complex and induces the exchange of GDP to GTP. It remains bound to the aminoacyl-tRNA.EF-Tu.GTP complex up to the GTP hydrolysis stage on the ribosome. This Chlamydia caviae (strain ATCC VR-813 / DSM 19441 / 03DC25 / GPIC) (Chlamydophila caviae) protein is Elongation factor Ts.